Consider the following 236-residue polypeptide: Apoptosis regulator Bcl-2 (236 aa).

Residues 10–30 (DNREIVMKYIHYKLSQRGYEW) carry the BH4 motif. Thr69 carries the post-translational modification Phosphothreonine; by MAPK8. Ser70 carries the phosphoserine; by MAPK8 and PKC modification. Ser84 carries the phosphoserine; by MAPK8 modification. A BH3 motif is present at residues 90 to 104 (VHLTLRRAGDDFSRR). Residues 133–152 (ELFRDGVNWGRIVAFFEFGG) carry the BH1 motif. The BH2 motif lies at 184-199 (TWIQDNGGWDAFVELY). The helical transmembrane segment at 209–230 (FSWLSLKTLLSLALVGACITLG) threads the bilayer.

It belongs to the Bcl-2 family. In terms of assembly, forms homodimers, and heterodimers with BAX, BAD, BAK and Bcl-X(L). Heterodimerization with BAX requires intact BH1 and BH2 motifs, and is necessary for anti-apoptotic activity. Component of the complex, at least composed of LRPPRC, BECN1 and BCL2; the interactions prevent BECN1 from forming an autophagy-inducing complex with PIK3C3. Interacts with EI24. Also interacts with APAF1, BBC3, BCL2L1, BNIPL, MRPL41 and TP53BP2. Binding to FKBP8 seems to target BCL2 to the mitochondria and probably interferes with the binding of BCL2 to its targets. Interacts with BAG1 in an ATP-dependent manner. Interacts with RAF1 (the 'Ser-338' and 'Ser-339' phosphorylated form). Interacts (via the BH4 domain) with EGLN3; the interaction prevents the formation of the BAX-BCL2 complex and inhibits the anti-apoptotic activity of BCL2. Interacts with G0S2; this interaction also prevents the formation of the anti-apoptotic BAX-BCL2 complex. Interacts with RTL10/BOP. Interacts with the SCF(FBXO10) complex. Interacts (via the loop between motifs BH4 and BH3) with NLRP1 (via LRR repeats), but not with NLRP2, NLRP3, NLRP4, PYCARD, nor MEFV. Interacts with GIMAP3/IAN4, GIMAP4/IAN1 and GIMAP5/IAN5. Interacts with BCAP31. Interacts with IRF3; the interaction is inhibited by Sendai virus infection. Interacts with BECN1; thereby inhibiting autophagy in non-starvation conditions. Interacts with AMBRA1; thereby inhibiting autophagy. Phosphorylation/dephosphorylation on Ser-70 regulates anti-apoptotic activity. Growth factor-stimulated phosphorylation on Ser-70 by PKC is required for the anti-apoptosis activity and occurs during the G2/M phase of the cell cycle. In the absence of growth factors, BCL2 appears to be phosphorylated by other protein kinases such as ERKs and stress-activated kinases. Phosphorylated by MAPK8/JNK1 at Thr-69, Ser-70 and Ser-84, which stimulates starvation-induced autophagy. Dephosphorylated by protein phosphatase 2A (PP2A). In terms of processing, proteolytically cleaved by caspases during apoptosis. The cleaved protein, lacking the BH4 motif, has pro-apoptotic activity, causes the release of cytochrome c into the cytosol promoting further caspase activity. Post-translationally, monoubiquitinated by PRKN, leading to an increase in its stability. Ubiquitinated by SCF(FBXO10), leading to its degradation by the proteasome.

The protein localises to the mitochondrion outer membrane. The protein resides in the nucleus membrane. Its subcellular location is the endoplasmic reticulum membrane. It is found in the cytoplasm. Its function is as follows. Suppresses apoptosis in a variety of cell systems including factor-dependent lymphohematopoietic and neural cells. Regulates cell death by controlling the mitochondrial membrane permeability. Appears to function in a feedback loop system with caspases. Inhibits caspase activity either by preventing the release of cytochrome c from the mitochondria and/or by binding to the apoptosis-activating factor (APAF-1). Also acts as an inhibitor of autophagy: interacts with BECN1 and AMBRA1 during non-starvation conditions and inhibits their autophagy function. May attenuate inflammation by impairing NLRP1-inflammasome activation, hence CASP1 activation and IL1B release. The chain is Apoptosis regulator Bcl-2 (BCL2) from Cricetulus griseus (Chinese hamster).